We begin with the raw amino-acid sequence, 261 residues long: 3'-5' ssDNA/RNA exonuclease TatD (261 aa).

Glu92, His128, and His153 together coordinate a divalent metal cation.

It belongs to the metallo-dependent hydrolases superfamily. TatD-type hydrolase family. TatD subfamily. Monomer. Mg(2+) serves as cofactor.

The protein resides in the cytoplasm. 3'-5' exonuclease that prefers single-stranded DNA and RNA. May play a role in the H(2)O(2)-induced DNA damage repair. The protein is 3'-5' ssDNA/RNA exonuclease TatD of Erwinia billingiae (strain Eb661).